The chain runs to 301 residues: 2-dehydropantoate 2-reductase (301 aa).

NADP(+) is bound by residues 7 to 12, Lys-74, Asn-99, and Ala-123; that span reads GAGAIG. Lys-179 (proton donor) is an active-site residue. Substrate contacts are provided by residues Lys-179, Asn-183, Asn-187, Asn-197, and 246–249; that span reads NYNS. NADP(+) is bound at residue Glu-261.

It belongs to the ketopantoate reductase family.

Its subcellular location is the cytoplasm. The catalysed reaction is (R)-pantoate + NAD(+) = 2-dehydropantoate + NADH + H(+). The enzyme catalyses (R)-pantoate + NADP(+) = 2-dehydropantoate + NADPH + H(+). Its pathway is cofactor biosynthesis; coenzyme A biosynthesis. Catalyzes the NAD(P)H-dependent reduction of ketopantoate into pantoic acid. In Pyrococcus horikoshii (strain ATCC 700860 / DSM 12428 / JCM 9974 / NBRC 100139 / OT-3), this protein is 2-dehydropantoate 2-reductase.